The chain runs to 255 residues: Probable pyridoxal 5'-phosphate synthase subunit PDX2 (255 aa).

An L-glutamine-binding site is contributed by 46–48 (GES). The active-site Nucleophile is Cys78. L-glutamine contacts are provided by residues Arg108 and 142–143 (IR). Catalysis depends on charge relay system residues His202 and Glu204. Residues 225-255 (GASSSSSKTIVSVGETSAGPEPAKPDLPIFQ) are disordered.

This sequence belongs to the glutaminase PdxT/SNO family. In terms of assembly, interacts with PDX1.1 or PDX1.3, but not with PDX1.2. Binds to RPA2A. Strongly expressed in roots, stems, leaves and flowers.

It localises to the cytoplasm. It catalyses the reaction aldehydo-D-ribose 5-phosphate + D-glyceraldehyde 3-phosphate + L-glutamine = pyridoxal 5'-phosphate + L-glutamate + phosphate + 3 H2O + H(+). The enzyme catalyses L-glutamine + H2O = L-glutamate + NH4(+). It functions in the pathway cofactor biosynthesis; pyridoxal 5'-phosphate biosynthesis. Its function is as follows. Catalyzes the hydrolysis of glutamine to glutamate and ammonia as part of the biosynthesis of pyridoxal 5'-phosphate. The resulting ammonia molecule is channeled to the active site of PDX1. Involved in the indirect resistance to singlet oxygen-generating photosensitizers. This is Probable pyridoxal 5'-phosphate synthase subunit PDX2 (PDX2) from Arabidopsis thaliana (Mouse-ear cress).